Consider the following 448-residue polypeptide: Homogentisate 1,2-dioxygenase (448 aa).

H303 (proton acceptor) is an active-site residue. Residues H346 and E352 each coordinate Fe cation. Homogentisate-binding residues include Y361 and H382. H382 is a Fe cation binding site.

It belongs to the homogentisate dioxygenase family. In terms of assembly, hexamer; dimer of trimers. Requires Fe cation as cofactor.

It carries out the reaction homogentisate + O2 = 4-maleylacetoacetate + H(+). It participates in amino-acid degradation; L-phenylalanine degradation; acetoacetate and fumarate from L-phenylalanine: step 4/6. Involved in the catabolism of homogentisate (2,5-dihydroxyphenylacetate or 2,5-OH-PhAc), a central intermediate in the degradation of phenylalanine and tyrosine. Catalyzes the oxidative ring cleavage of the aromatic ring of homogentisate to yield maleylacetoacetate. The protein is Homogentisate 1,2-dioxygenase of Rhodopseudomonas palustris (strain ATCC BAA-98 / CGA009).